The sequence spans 25 residues: Panurgine K (25 aa).

2 cysteine pairs are disulfide-bonded: Cys-8–Cys-23 and Cys-11–Cys-19.

It localises to the target cell membrane. The protein resides in the secreted. In terms of biological role, antimicrobial peptide active against Gram-positive bacteria M.luteus (MIC=1.6 uM) and B.subtilis (MIC=3.3 uM). Less active against Gram-negative bacteria E.coli (MIC=63.3 uM) and yeast C.albicans (MIC=24.2 uM). Not active against S.aureus and P.aeruginosa. Has no hemolytic activity against human erythrocytes. Probably acts by disrupting membranes of target cells. This chain is Panurgine K, found in Panurgus calcaratus (Solitary bee).